Here is a 275-residue protein sequence, read N- to C-terminus: Bis(5'-nucleosyl)-tetraphosphatase, symmetrical (275 aa).

It belongs to the Ap4A hydrolase family.

The enzyme catalyses P(1),P(4)-bis(5'-adenosyl) tetraphosphate + H2O = 2 ADP + 2 H(+). Hydrolyzes diadenosine 5',5'''-P1,P4-tetraphosphate to yield ADP. The chain is Bis(5'-nucleosyl)-tetraphosphatase, symmetrical from Photorhabdus laumondii subsp. laumondii (strain DSM 15139 / CIP 105565 / TT01) (Photorhabdus luminescens subsp. laumondii).